A 291-amino-acid polypeptide reads, in one-letter code: Porphobilinogen deaminase (291 aa).

Position 237 is an S-(dipyrrolylmethanemethyl)cysteine (Cys237).

It belongs to the HMBS family. In terms of assembly, monomer. Requires dipyrromethane as cofactor.

The catalysed reaction is 4 porphobilinogen + H2O = hydroxymethylbilane + 4 NH4(+). Its pathway is porphyrin-containing compound metabolism; protoporphyrin-IX biosynthesis; coproporphyrinogen-III from 5-aminolevulinate: step 2/4. Its function is as follows. Tetrapolymerization of the monopyrrole PBG into the hydroxymethylbilane pre-uroporphyrinogen in several discrete steps. The protein is Porphobilinogen deaminase of Clostridium perfringens (strain 13 / Type A).